The following is a 659-amino-acid chain: Threonine--tRNA ligase (659 aa).

The TGS domain occupies 1 to 60; that stretch reads MTVYLPDGKPLELPEGATAKDVARALGEGWERRAVGAIVDGELYDLLKPLPQGAKVRLLT. 2 catalytic regions span residues 234–548 and 252–552; these read TAEE…EHFA and DHRR…GDFP. The Zn(2+) site is built by C349, H400, and H529.

It belongs to the class-II aminoacyl-tRNA synthetase family. In terms of assembly, homodimer. The cofactor is Zn(2+).

The protein localises to the cytoplasm. It catalyses the reaction tRNA(Thr) + L-threonine + ATP = L-threonyl-tRNA(Thr) + AMP + diphosphate + H(+). Catalyzes the attachment of threonine to tRNA(Thr) in a two-step reaction: L-threonine is first activated by ATP to form Thr-AMP and then transferred to the acceptor end of tRNA(Thr). Also edits incorrectly charged L-seryl-tRNA(Thr). This chain is Threonine--tRNA ligase, found in Thermus thermophilus (strain ATCC 27634 / DSM 579 / HB8).